We begin with the raw amino-acid sequence, 659 residues long: Cytochrome bo(3) ubiquinol oxidase subunit 1 (659 aa).

At 1 to 14 (MFGKLTLKAIPVDE) the chain is on the extracellular side. The chain crosses the membrane as a helical span at residues 15–35 (PIIMVTYISIILIALFISFSI). The Cytoplasmic segment spans residues 36–58 (TYFKKWKYLWYEWFTTVDHKKIS). Residues 59–79 (IMYGILAFIMLFRGFVDAILM) form a helical membrane-spanning segment. Arg-71, Asp-75, and His-98 together coordinate a ubiquinone. At 80–106 (RTQQVIASSGNTGFLPPHHYDQIFTAH) the chain is on the extracellular side. Heme b is bound at residue His-106. A helical membrane pass occupies residues 107-127 (GVIMIFFVAMPLVIGLMNLVV). The Cytoplasmic segment spans residues 128–145 (PLQIGARDVAFPFLNNLS). A helical transmembrane segment spans residues 146–166 (FWLNVSGAILLTLSLGIGEFA). Over 167–189 (QTGWLAYPPLSEVKYSPGVGVDY) the chain is Extracellular. Trp-170 is a heme b binding site. A helical membrane pass occupies residues 190–210 (WIWSLQISGVGTTLTGINFLI). Over 211–225 (TILKMRAPGMCFFKM) the chain is Cytoplasmic. The helical transmembrane segment at 226-246 (PVFTWAALCTNILIVISFPVL) threads the bilayer. Over 247-277 (TTTLLLLTLDRCFDFHFFTNNFGGNPMMYVN) the chain is Extracellular. The chain crosses the membrane as a helical span at residues 278-298 (LIWIWGHPEVYILVLPVFGVF). His-284 is a binding site for Cu(2+). The segment at residues 284-288 (HPEVY) is a cross-link (1'-histidyl-3'-tyrosine (His-Tyr)). Residue Tyr-288 coordinates Fe(II)-heme o. Residues 299-309 (SEVVATFSKKR) lie on the Cytoplasmic side of the membrane. The helical transmembrane segment at 310–330 (LFGYVSLVWATLAITILSFIV) threads the bilayer. Over 331-347 (WLHHFFTMGAGSNVNAF) the chain is Extracellular. Cu(2+)-binding residues include His-333 and His-334. Residues 348-368 (FGITTMIIAIPTGVKIFNWLF) form a helical membrane-spanning segment. At 369-380 (TMYQGRVHMHSS) the chain is on the cytoplasmic side. A helical transmembrane segment spans residues 381–401 (MLWTIGFLITFSIGGMTGVLL). Residues 402 to 413 (SIPPADFILHNS) are Extracellular-facing. Fe(II)-heme o is bound by residues His-411 and His-419. Residues 414–434 (LFLVAHFHNVIIGGVVFGCFA) form a helical membrane-spanning segment. Residue His-421 participates in heme b binding. Over 435-456 (GINYWFPKLFGFILNELWGKRA) the chain is Cytoplasmic. The helical transmembrane segment at 457 to 477 (FWFWIIGFFTAFMPLYFLGFM) threads the bilayer. The Extracellular portion of the chain corresponds to 478–490 (GMTRRLSQNIDIE). Positions 481 and 482 each coordinate heme b. A helical transmembrane segment spans residues 491 to 511 (FHFLLSIAAIGAILIGIGILC). Over 512–580 (QIIQFWVSVR…KNQVQKKQYS (69 aa)) the chain is Cytoplasmic. Residues 581-601 (AIHMPKNTGLGIFISFFSLLF) traverse the membrane as a helical segment. The Extracellular portion of the chain corresponds to 602–605 (GFSA). A helical membrane pass occupies residues 606–626 (VWNIIWLSFLSFLVVIISLIF). At 627–659 (KSIDENTEYTVSVKEIESIENRHLENVQKAGLK) the chain is on the cytoplasmic side.

Belongs to the heme-copper respiratory oxidase family. In terms of assembly, the cytochrome bo(3) ubiquinol oxidase complex is a heterooctamer of two A chains, two B chains, two C chains and two D chains. The cofactor is Cu(2+). Heme b is required as a cofactor. Requires Fe(II)-heme o as cofactor.

The protein resides in the cell membrane. The enzyme catalyses 2 a ubiquinol + O2 + n H(+)(in) = 2 a ubiquinone + 2 H2O + n H(+)(out). Cytochrome bo(3) ubiquinol oxidase is the terminal enzyme in the aerobic respiratory chain. Catalyzes the four-electron reduction of O2 to water, using a ubiquinol as a membrane soluble electron donor for molecular oxygen reduction. Has proton pump activity across the membrane in addition to electron transfer, pumping 2 protons/electron and generating a proton motive force. All the redox centers of this enzyme complex are located within the largest subunit, subunit I. Protons are probably pumped via D- and K- channels found in this subunit. The polypeptide is Cytochrome bo(3) ubiquinol oxidase subunit 1 (cyoB) (Buchnera aphidicola subsp. Schizaphis graminum (strain Sg)).